Here is a 540-residue protein sequence, read N- to C-terminus: Membrane protein insertase YidC (540 aa).

5 helical membrane-spanning segments follow: residues 7–27 (LLVL…QMDY), 345–365 (IVSN…GILY), 415–435 (LGGC…YWTF), 453–473 (LSAQ…MFLL), and 494–514 (PLIF…YWLV).

It belongs to the OXA1/ALB3/YidC family. Type 1 subfamily. Interacts with the Sec translocase complex via SecD. Specifically interacts with transmembrane segments of nascent integral membrane proteins during membrane integration.

The protein resides in the cell inner membrane. In terms of biological role, required for the insertion and/or proper folding and/or complex formation of integral membrane proteins into the membrane. Involved in integration of membrane proteins that insert both dependently and independently of the Sec translocase complex, as well as at least some lipoproteins. Aids folding of multispanning membrane proteins. The chain is Membrane protein insertase YidC from Mannheimia succiniciproducens (strain KCTC 0769BP / MBEL55E).